The following is a 79-amino-acid chain: Conotoxin TxMEKL-021 (79 aa).

The signal sequence occupies residues 1-19 (MEKLTILLLVAVVLMSTQA). Residues 20 to 47 (LPQGGGEKRPRENIRFLSKRKSNAERWR) constitute a propeptide that is removed on maturation. 3 disulfide bridges follow: C51/C65, C58/C69, and C64/C75.

It belongs to the conotoxin O2 superfamily. As to expression, expressed by the venom duct.

It is found in the secreted. This chain is Conotoxin TxMEKL-021, found in Conus textile (Cloth-of-gold cone).